The chain runs to 117 residues: MSEKKSQEKPCSDNNQIEDPSSRPEVQVPVNYVYRILQEEQYTPCIGSTTSDFLLAMLDYLTDYILEVVGSEANINNQQNISQDRERQRDNDREPSRGFKNAPFSLFDEMPGPRRNG.

Basic and acidic residues-rich tracts occupy residues 1 to 11 (MSEKKSQEKPC) and 83 to 97 (QDRE…EPSR). Disordered stretches follow at residues 1–25 (MSEK…SRPE) and 74–117 (NINN…RRNG).

As to quaternary structure, may interact with the N-terminus of HD.

In Mus musculus (Mouse), this protein is Huntingtin-interacting protein M.